The primary structure comprises 61 residues: Potassium channel toxin alpha-KTx 6.8 (61 aa).

The N-terminal stretch at 1–23 (MNAKFILLLLVVTTTILLPDTQG) is a signal peptide. Intrachain disulfides connect Cys-29–Cys-50, Cys-35–Cys-55, Cys-39–Cys-57, and Cys-45–Cys-60. The residue at position 60 (Cys-60) is a Cysteine amide.

Belongs to the short scorpion toxin superfamily. Potassium channel inhibitor family. Alpha-KTx 06 subfamily. As to expression, expressed by the venom gland.

It is found in the secreted. Blocker of voltage-gated potassium channels. The protein is Potassium channel toxin alpha-KTx 6.8 of Opistophthalmus carinatus (African yellow leg scorpion).